A 699-amino-acid chain; its full sequence is Long-chain-fatty-acid--CoA ligase 1 (699 aa).

At M1 the chain carries N-acetylmethionine. Y9 bears the 3'-nitrotyrosine mark. Residues 25–45 form a helical; Signal-anchor for type III membrane protein membrane-spanning segment; sequence LPTNTLMGFGAFAALTTFWYA. The Cytoplasmic segment spans residues 46–699; it reads TRPKALKPPC…IDELYSTIKI (654 aa). At Y85 the chain carries Phosphotyrosine. The residue at position 86 (Y86) is a 3'-nitrotyrosine. O-linked (GlcNAc) serine glycosylation occurs at S136. N6-acetyllysine occurs at positions 208, 357, and 387. S621 bears the Phosphoserine mark. K633 carries the post-translational modification N6-acetyllysine.

Belongs to the ATP-dependent AMP-binding enzyme family. It depends on Mg(2+) as a cofactor. As to expression, liver, heart, epididymal adipose and to a lesser extent brain, small intestine and lung.

The protein localises to the mitochondrion outer membrane. Its subcellular location is the peroxisome membrane. It localises to the microsome membrane. It is found in the endoplasmic reticulum membrane. It carries out the reaction a long-chain fatty acid + ATP + CoA = a long-chain fatty acyl-CoA + AMP + diphosphate. The enzyme catalyses (5Z,8Z,11Z,14Z)-eicosatetraenoate + ATP + CoA = (5Z,8Z,11Z,14Z)-eicosatetraenoyl-CoA + AMP + diphosphate. It catalyses the reaction 3,7,11,15-tetramethylhexadecanoate + ATP + CoA = phytanoyl-CoA + AMP + diphosphate. The catalysed reaction is hexadecanoate + ATP + CoA = hexadecanoyl-CoA + AMP + diphosphate. It carries out the reaction (E)-hexadec-2-enoate + ATP + CoA = (2E)-hexadecenoyl-CoA + AMP + diphosphate. The enzyme catalyses 2,6,10,14-tetramethylpentadecanoate + ATP + CoA = pristanoyl-CoA + AMP + diphosphate. It catalyses the reaction 14,15-epoxy-(5Z,8Z,11Z)-eicosatrienoate + ATP + CoA = 14,15-epoxy-(5Z,8Z,11Z)-eicosatrienoyl-CoA + AMP + diphosphate. The catalysed reaction is 5-hydroxy-(6E,8Z,11Z,14Z)-eicosatetraenoate + ATP + CoA = 5-hydroxy-(6E,8Z,11Z,14Z)-eicosatetraenoyl-CoA + AMP + diphosphate. It carries out the reaction 12-hydroxy-(5Z,8Z,10E,14Z)-eicosatetraenoate + ATP + CoA = 12-hydroxy-(5Z,8Z,10E,14Z)-eicosatetraenoyl-CoA + AMP + diphosphate. The enzyme catalyses 15-hydroxy-(5Z,8Z,11Z,13E)-eicosatetraenoate + ATP + CoA = 15-hydroxy-(5Z,8Z,11Z,13E)-eicosatetraenoyl-CoA + AMP + diphosphate. It catalyses the reaction (9Z)-octadecenoate + ATP + CoA = (9Z)-octadecenoyl-CoA + AMP + diphosphate. Its activity is regulated as follows. Inhibited at high temperature and by arachidonate. In terms of biological role, catalyzes the conversion of long-chain fatty acids to their active form acyl-CoAs for both synthesis of cellular lipids, and degradation via beta-oxidation. Preferentially uses palmitoleate, oleate and linoleate. Preferentially activates arachidonate than epoxyeicosatrienoic acids (EETs) or hydroxyeicosatrienoic acids (HETEs). In Rattus norvegicus (Rat), this protein is Long-chain-fatty-acid--CoA ligase 1.